We begin with the raw amino-acid sequence, 269 residues long: MNQMNPAFVMPDVQSTVDTRQIPIQRVGVKAVRHPLTVRTESGDVQPTVGVWNLDVHLPADQKGTHMSRFVALLEESREPLTVERFRAMLASMLVRLEAEAGRIEVTFPYFVNKTAPVSGVQSLLDYEVTLAGESRNGETRLFLKVLVPVTSLCPCSKKISQYGAHNQRSHVTIDAELAADLPVEALIRIAEEEASCELWGLLKRPDEKFVTERAYENPKFVEDLVRDVAQRLDADERVVAYVLEAENFESIHNHSAYALIERDKRHAA.

This sequence belongs to the GTP cyclohydrolase IV family.

It catalyses the reaction GTP + H2O = 7,8-dihydroneopterin 3'-triphosphate + formate + H(+). Its pathway is cofactor biosynthesis; 7,8-dihydroneopterin triphosphate biosynthesis; 7,8-dihydroneopterin triphosphate from GTP: step 1/1. Functionally, converts GTP to 7,8-dihydroneopterin triphosphate. This Burkholderia ambifaria (strain MC40-6) protein is GTP cyclohydrolase FolE2.